The sequence spans 352 residues: C-C chemokine receptor type 5 (352 aa).

Topologically, residues 1 to 30 (MVYQVSSPTYDIDYYTSEPCQKINVKQIAA) are extracellular. Tyr3 carries the post-translational modification Sulfotyrosine. Ser6 and Ser7 each carry an O-linked (GalNAc...) serine glycan. Tyr10, Tyr14, and Tyr15 each carry sulfotyrosine. Intrachain disulfides connect Cys20-Cys269 and Cys101-Cys178. The helical transmembrane segment at 31–58 (RLLPPLYSLVFIFGFVGNILVVLILINC) threads the bilayer. At 59 to 68 (KRLKSMTDIY) the chain is on the cytoplasmic side. A helical membrane pass occupies residues 69-89 (LLNLAISDLLFLLTIPFWAHY). Residues 90 to 102 (AAAQWDFGNTMCQ) are Extracellular-facing. Residues 103–124 (LLTGLYLIGFFSGIFFIILLTI) traverse the membrane as a helical segment. Residues 125-141 (DRYLAIVHAVFALKART) lie on the Cytoplasmic side of the membrane. A helical membrane pass occupies residues 142-166 (VTFGLVTSVITWVVAVFASLPGIIF). The Extracellular segment spans residues 167 to 198 (TRSQREGLHYTCSSHFPSSQYQFWKNFQTLKI). A helical transmembrane segment spans residues 199 to 218 (VILGLVLPLLVMVICYSGIL). The Cytoplasmic portion of the chain corresponds to 219-235 (KTLLRCRNEKKRHRAVR). A helical membrane pass occupies residues 236–260 (LIFTIMIVYFLFWAPYNIVLLLNTF). At 261–277 (QEFFGLNNCSSSNRLDQ) the chain is on the extracellular side. The chain crosses the membrane as a helical span at residues 278–301 (AMQVTETLGMTHCCINPIIYAFVG). Topologically, residues 302-352 (EKFRNYLLVFFQKHLAKRFCKCCSISQQEAPERASSVYTRSTGEQETTVGL) are cytoplasmic. 3 S-palmitoyl cysteine lipidation sites follow: Cys321, Cys323, and Cys324. Residues Ser336, Ser337, and Ser342 each carry the phosphoserine; by BARK1 modification.

It belongs to the G-protein coupled receptor 1 family. As to quaternary structure, interacts with PRAF2. Efficient ligand binding to CCL3/MIP-1alpha and CCL4/MIP-1beta requires sulfation, O-glycosylation and sialic acid modifications. Glycosylation on Ser-6 is required for efficient binding of CCL4. Interacts with GRK2. Interacts with ARRB1 and ARRB2. Interacts with CNIH4. Interacts with S100A4; this interaction stimulates T-lymphocyte chemotaxis. In terms of processing, sulfated on at least 2 of the N-terminal tyrosines. Sulfation is required for efficient binding of the chemokines, CCL3 and CCL4. Palmitoylation in the C-terminal is important for cell surface expression. Post-translationally, phosphorylation on serine residues in the C-terminal is stimulated by binding CC chemokines especially by APO-RANTES. In terms of processing, O-glycosylated, but not N-glycosylated. Ser-6 appears to be the major site even if Ser-7 may be also O-glycosylated. Also sialylated glycans present which contribute to chemokine binding. Thr-16 and Ser-17 may also be glycosylated and, if so, with small moieties such as a T-antigen.

The protein localises to the cell membrane. Its function is as follows. Receptor for a number of inflammatory CC-chemokines including CCL3/MIP-1-alpha, CCL4/MIP-1-beta and RANTES and subsequently transduces a signal by increasing the intracellular calcium ion level. May play a role in the control of granulocytic lineage proliferation or differentiation. Participates in T-lymphocyte migration to the infection site by acting as a chemotactic receptor. The sequence is that of C-C chemokine receptor type 5 (CCR5) from Allochrocebus solatus (Sun-tailed monkey).